A 178-amino-acid chain; its full sequence is Acireductone dioxygenase (178 aa).

H100, H102, E106, and H145 together coordinate Fe(2+). H100, H102, E106, and H145 together coordinate Ni(2+).

It belongs to the acireductone dioxygenase (ARD) family. In terms of assembly, monomer. Fe(2+) serves as cofactor. It depends on Ni(2+) as a cofactor.

It catalyses the reaction 1,2-dihydroxy-5-(methylsulfanyl)pent-1-en-3-one + O2 = 3-(methylsulfanyl)propanoate + CO + formate + 2 H(+). It carries out the reaction 1,2-dihydroxy-5-(methylsulfanyl)pent-1-en-3-one + O2 = 4-methylsulfanyl-2-oxobutanoate + formate + 2 H(+). The protein operates within amino-acid biosynthesis; L-methionine biosynthesis via salvage pathway; L-methionine from S-methyl-5-thio-alpha-D-ribose 1-phosphate: step 5/6. Functionally, catalyzes 2 different reactions between oxygen and the acireductone 1,2-dihydroxy-3-keto-5-methylthiopentene (DHK-MTPene) depending upon the metal bound in the active site. Fe-containing acireductone dioxygenase (Fe-ARD) produces formate and 2-keto-4-methylthiobutyrate (KMTB), the alpha-ketoacid precursor of methionine in the methionine recycle pathway. Ni-containing acireductone dioxygenase (Ni-ARD) produces methylthiopropionate, carbon monoxide and formate, and does not lie on the methionine recycle pathway. This Bacillus subtilis (strain 168) protein is Acireductone dioxygenase (mtnD).